We begin with the raw amino-acid sequence, 435 residues long: Bystin (435 aa).

Residues methionine 1–glutamate 102 form a disordered region. An Omega-N-methylarginine modification is found at arginine 40. Residues alanine 71–threonine 87 show a composition bias toward basic and acidic residues. Serine 98 carries the post-translational modification Phosphoserine. At threonine 154 the chain carries Phosphothreonine. Phosphoserine is present on residues serine 165 and serine 412.

The protein belongs to the bystin family. Binds trophinin, tastin and cytokeratins.

Its subcellular location is the cytoplasm. The protein localises to the nucleus. It localises to the nucleolus. Required for processing of 20S pre-rRNA precursor and biogenesis of 40S ribosomal subunits. In Bos taurus (Bovine), this protein is Bystin (BYSL).